The primary structure comprises 565 residues: NAD-dependent malic enzyme (565 aa).

Tyr104 functions as the Proton donor in the catalytic mechanism. Arg157 is an NAD(+) binding site. Lys175 (proton acceptor) is an active-site residue. A divalent metal cation contacts are provided by Glu246, Asp247, and Asp270. Residues Asp270 and Asn418 each contribute to the NAD(+) site.

Belongs to the malic enzymes family. In terms of assembly, homotetramer. Mg(2+) is required as a cofactor. Mn(2+) serves as cofactor.

It catalyses the reaction (S)-malate + NAD(+) = pyruvate + CO2 + NADH. It carries out the reaction oxaloacetate + H(+) = pyruvate + CO2. In Escherichia coli (strain SMS-3-5 / SECEC), this protein is NAD-dependent malic enzyme.